The following is a 424-amino-acid chain: Serine--tRNA ligase (424 aa).

231–233 (TAE) lines the L-serine pocket. 262 to 264 (RSE) is an ATP binding site. Glu-285 provides a ligand contact to L-serine. Position 349–352 (349–352 (EISS)) interacts with ATP. Residue Ser-385 participates in L-serine binding.

It belongs to the class-II aminoacyl-tRNA synthetase family. Type-1 seryl-tRNA synthetase subfamily. As to quaternary structure, homodimer. The tRNA molecule binds across the dimer.

It is found in the cytoplasm. It carries out the reaction tRNA(Ser) + L-serine + ATP = L-seryl-tRNA(Ser) + AMP + diphosphate + H(+). The catalysed reaction is tRNA(Sec) + L-serine + ATP = L-seryl-tRNA(Sec) + AMP + diphosphate + H(+). It functions in the pathway aminoacyl-tRNA biosynthesis; selenocysteinyl-tRNA(Sec) biosynthesis; L-seryl-tRNA(Sec) from L-serine and tRNA(Sec): step 1/1. Catalyzes the attachment of serine to tRNA(Ser). Is also able to aminoacylate tRNA(Sec) with serine, to form the misacylated tRNA L-seryl-tRNA(Sec), which will be further converted into selenocysteinyl-tRNA(Sec). The sequence is that of Serine--tRNA ligase from Bacillus cereus (strain G9842).